Consider the following 413-residue polypeptide: Eukaryotic initiation factor 4A-14 (413 aa).

Residues 40–68 carry the Q motif motif; that stretch reads DSFDAMGLQENLLRGIYAYGFEKPSAIQQ. Residues 71–241 form the Helicase ATP-binding domain; sequence IVPFCKGLDV…RKFMSKPVRI (171 aa). 84–91 contributes to the ATP binding site; it reads AQSGTGKT. The short motif at 189–192 is the DEAD box element; it reads DEAD. The 162-residue stretch at 252–413 folds into the Helicase C-terminal domain; sequence GIKQFYVNVD…ELPANVADLL (162 aa).

Belongs to the DEAD box helicase family. eIF4A subfamily. In terms of assembly, eIF4F is a multi-subunit complex, the composition of which varies with external and internal environmental conditions. It is composed of at least EIF4A, EIF4E and EIF4G.

It catalyses the reaction ATP + H2O = ADP + phosphate + H(+). Its function is as follows. ATP-dependent RNA helicase which is a subunit of the eIF4F complex involved in cap recognition and is required for mRNA binding to ribosome. In the current model of translation initiation, eIF4A unwinds RNA secondary structures in the 5'-UTR of mRNAs which is necessary to allow efficient binding of the small ribosomal subunit, and subsequent scanning for the initiator codon. The sequence is that of Eukaryotic initiation factor 4A-14 from Nicotiana tabacum (Common tobacco).